The chain runs to 138 residues: Basic phospholipase A2 Tbo-G6D49 (138 aa).

Residues 1–16 form the signal peptide; it reads MRTLWIMAVLLVGVEG. Cystine bridges form between C42–C131, C44–C60, C59–C111, C65–C138, C66–C104, C73–C97, and C91–C102. Positions 43, 45, and 47 each coordinate Ca(2+). Residue H63 is part of the active site. Position 64 (D64) interacts with Ca(2+). Residue D105 is part of the active site.

As to quaternary structure, monomer. Ca(2+) is required as a cofactor. As to expression, expressed by the venom gland.

Its subcellular location is the secreted. It carries out the reaction a 1,2-diacyl-sn-glycero-3-phosphocholine + H2O = a 1-acyl-sn-glycero-3-phosphocholine + a fatty acid + H(+). Its function is as follows. Snake venom phospholipase A2 (PLA2) that impairs hemostasis. It weakly inhibits ADP-induced platelet aggregation when tested on platelet rich plasma from human and rabbit blood (15-25% of inhibition at 5-10 ug of enzyme), and dose-dependently inhibits blood coagulation, possibly by inhibiting thrombin activation. Exhibits strong hydrolytic activities toward L-dipalmitoyl phosphatidylcholine. PLA2 catalyzes the calcium-dependent hydrolysis of the 2-acyl groups in 3-sn-phosphoglycerides. The sequence is that of Basic phospholipase A2 Tbo-G6D49 from Craspedocephalus borneensis (Borneo pit viper).